The primary structure comprises 132 residues: Antimicrobial protein Ace-AMP1 (132 aa).

The first 27 residues, 1-27 (MVRVVSLLAASTFILLIMIISSPYANS), serve as a signal peptide directing secretion. 4 disulfides stabilise this stretch: C31–C76, C41–C54, C55–C100, and C74–C116.

This sequence belongs to the plant LTP family. Highly divergent. In terms of assembly, monomer.

In terms of biological role, antifungal and antibacterial activity against the Gram-positive bacteria B.megaterium and S.lutea. The chain is Antimicrobial protein Ace-AMP1 from Allium cepa (Onion).